Reading from the N-terminus, the 268-residue chain is Uronate dehydrogenase (268 aa).

Residues G17–L18, D37–S39, D55–L56, and F75–S79 each bind NAD(+). Residues S79 and S115–H117 contribute to the substrate site. The active-site Proton acceptor is Y140. K144 provides a ligand contact to NAD(+). A substrate-binding site is contributed by S169. S170 is an NAD(+) binding site. R178 provides a ligand contact to substrate.

The protein belongs to the NAD(P)-dependent epimerase/dehydratase family. In terms of assembly, homohexamer.

It carries out the reaction beta-D-galacturonate + NAD(+) = D-galactaro-1,5-lactone + NADH + H(+). The enzyme catalyses beta-D-glucuronate + NAD(+) = D-glucaro-1,5-lactone + NADH + H(+). Its pathway is carbohydrate acid metabolism; D-galacturonate degradation via prokaryotic oxidative pathway. In terms of biological role, catalyzes the oxidation of beta-D-galacturonate and beta-D-glucuronate to galactarate and D-glucarate, respectively. The polypeptide is Uronate dehydrogenase (udh) (Pseudomonas putida (strain ATCC 47054 / DSM 6125 / CFBP 8728 / NCIMB 11950 / KT2440)).